The following is a 624-amino-acid chain: Ubiquilin-2 (624 aa).

2 disordered regions span residues 1 to 32 and 106 to 141; these read MAENGESSGPPRPSRGPAAAQGSAAAPAEPKI and NRPQGQSTQPSNAAGTNTTSASTPRSNSTPISTNSN. Ala2 carries the N-acetylalanine modification. Low complexity predominate over residues 15 to 32; that stretch reads RGPAAAQGSAAAPAEPKI. The Ubiquitin-like domain occupies 33-107; sequence IKVTVKTPKE…VHLVIKSQNR (75 aa). Positions 106–115 are enriched in polar residues; it reads NRPQGQSTQP. Positions 116-141 are enriched in low complexity; the sequence is SNAAGTNTTSASTPRSNSTPISTNSN. 2 STI1 domains span residues 178 to 206 and 208 to 247; these read SPEMMIQIMENPFVQSMLSNPDLMRQLIM and NPQMQQLIQRNPEISHLLNNPDIMRQTLEIARNPAMMQEM. Residues 287-349 are disordered; the sequence is FGGNPFASVG…SGSGNSSSNA (63 aa). The segment covering 294-304 has biased composition (low complexity); the sequence is SVGSSSSSGEG. Pro residues predominate over residues 316–325; the sequence is LPNPWAPPPA. Positions 326–349 are enriched in low complexity; that stretch reads TQSSATTSTTTSTGSGSGNSSSNA. STI1 domains are found at residues 379-426 and 430-462; these read NPQL…QEQM and LPAFLQQMQNPDTLSAMSNPRAMQALMQIQQGL. Tandem repeats lie at residues 491–493, 494–496, 497–499, 500–502, 503–505, 506–508, 509–511, 512–514, 515–517, 518–520, 521–523, and 524–526. The 12 X 3 AA tandem repeats of P-X-X stretch occupies residues 491 to 526; sequence PVGPVTPIGPIGPIVPFTPIGPIGPIGPTGPAAPPG. Residues 512–556 are disordered; the sequence is PIGPIGPTGPAAPPGSTGSGGPTGPTVSSAAPSETTSPTSESGPN. Over residues 535–553 the composition is skewed to low complexity; it reads GPTVSSAAPSETTSPTSES. In terms of domain architecture, UBA spans 581 to 621; the sequence is RFQQQLEQLNAMGFLNREANLQALIATGGDINAAIERLLGS.

In terms of assembly, homodimer. Forms heterodimer with UBQLN1. Binds UBE3A and BTRC. Interacts with the 19S proteasome subunit. Interacts with C9orf72. Interacts with HNRNPA1 and HNRNPU. Found in a complex with UBQLN1 and MAP1LC3A/B/C. Interacts with EPS15, EPN1 and EPN2. Interacts with HERPUD1. Interacts with RAD23A. Interacts with TARDBP. Interacts (via C-terminus) with FAF2 (via N-terminus). Interacts with UBQLN4. Binds CD47. In terms of processing, degraded during macroautophagy.

It is found in the cytoplasm. The protein localises to the nucleus. Its subcellular location is the membrane. The protein resides in the cytoplasmic vesicle. It localises to the autophagosome. Functionally, plays an important role in the regulation of different protein degradation mechanisms and pathways including ubiquitin-proteasome system (UPS), autophagy and the endoplasmic reticulum-associated protein degradation (ERAD) pathway. Mediates the proteasomal targeting of misfolded or accumulated proteins for degradation by binding (via UBA domain) to their polyubiquitin chains and by interacting (via ubiquitin-like domain) with the subunits of the proteasome. Plays a role in the ERAD pathway via its interaction with ER-localized proteins FAF2/UBXD8 and HERPUD1 and may form a link between the polyubiquitinated ERAD substrates and the proteasome. Involved in the regulation of macroautophagy and autophagosome formation; required for maturation of autophagy-related protein LC3 from the cytosolic form LC3-I to the membrane-bound form LC3-II and may assist in the maturation of autophagosomes to autolysosomes by mediating autophagosome-lysosome fusion. Negatively regulates the endocytosis of GPCR receptors: AVPR2 and ADRB2, by specifically reducing the rate at which receptor-arrestin complexes concentrate in clathrin-coated pits (CCPs). This Homo sapiens (Human) protein is Ubiquilin-2 (UBQLN2).